Here is a 521-residue protein sequence, read N- to C-terminus: Glucose-6-phosphate isomerase (521 aa).

The active-site Proton donor is E351. Active-site residues include H382 and K491.

Belongs to the GPI family.

The protein resides in the cytoplasm. The enzyme catalyses alpha-D-glucose 6-phosphate = beta-D-fructose 6-phosphate. Its pathway is carbohydrate biosynthesis; gluconeogenesis. The protein operates within carbohydrate degradation; glycolysis; D-glyceraldehyde 3-phosphate and glycerone phosphate from D-glucose: step 2/4. Its function is as follows. Catalyzes the reversible isomerization of glucose-6-phosphate to fructose-6-phosphate. In Polaromonas naphthalenivorans (strain CJ2), this protein is Glucose-6-phosphate isomerase.